The following is a 244-amino-acid chain: Ubiquinone/menaquinone biosynthesis C-methyltransferase UbiE (244 aa).

S-adenosyl-L-methionine is bound by residues T70, D91, and D117 to A118.

Belongs to the class I-like SAM-binding methyltransferase superfamily. MenG/UbiE family.

The enzyme catalyses a 2-demethylmenaquinol + S-adenosyl-L-methionine = a menaquinol + S-adenosyl-L-homocysteine + H(+). The catalysed reaction is a 2-methoxy-6-(all-trans-polyprenyl)benzene-1,4-diol + S-adenosyl-L-methionine = a 5-methoxy-2-methyl-3-(all-trans-polyprenyl)benzene-1,4-diol + S-adenosyl-L-homocysteine + H(+). It participates in quinol/quinone metabolism; menaquinone biosynthesis; menaquinol from 1,4-dihydroxy-2-naphthoate: step 2/2. It functions in the pathway cofactor biosynthesis; ubiquinone biosynthesis. Its function is as follows. Methyltransferase required for the conversion of demethylmenaquinol (DMKH2) to menaquinol (MKH2) and the conversion of 2-polyprenyl-6-methoxy-1,4-benzoquinol (DDMQH2) to 2-polyprenyl-3-methyl-6-methoxy-1,4-benzoquinol (DMQH2). This is Ubiquinone/menaquinone biosynthesis C-methyltransferase UbiE from Nitrosospira multiformis (strain ATCC 25196 / NCIMB 11849 / C 71).